We begin with the raw amino-acid sequence, 168 residues long: G/U mismatch-specific DNA glycosylase (168 aa).

It belongs to the uracil-DNA glycosylase (UDG) superfamily. TDG/mug family. Binds DNA as a monomer.

It is found in the cytoplasm. It carries out the reaction Specifically hydrolyzes mismatched double-stranded DNA and polynucleotides, releasing free uracil.. In terms of biological role, excises ethenocytosine and uracil, which can arise by alkylation or deamination of cytosine, respectively, from the corresponding mispairs with guanine in ds-DNA. It is capable of hydrolyzing the carbon-nitrogen bond between the sugar-phosphate backbone of the DNA and the mispaired base. The complementary strand guanine functions in substrate recognition. Required for DNA damage lesion repair in stationary-phase cells. This is G/U mismatch-specific DNA glycosylase from Salmonella gallinarum (strain 287/91 / NCTC 13346).